The following is a 354-amino-acid chain: Glutamine synthetase (354 aa).

One can recognise a GS beta-grasp domain in the interval 22–101; the sequence is IQAEYVWIDG…VLAETYNNDG (80 aa). In terms of domain architecture, GS catalytic spans 108–354; the sequence is HRHHAKKVFD…IIAETTILDK (247 aa).

Belongs to the glutamine synthetase family. As to quaternary structure, homooctamer.

Its subcellular location is the cytoplasm. The enzyme catalyses L-glutamate + NH4(+) + ATP = L-glutamine + ADP + phosphate + H(+). The sequence is that of Glutamine synthetase (glnA) from Agaricus bisporus (White button mushroom).